The primary structure comprises 230 residues: Interleukin-22 receptor subunit alpha-2 (230 aa).

The first 20 residues, 1-20, serve as a signal peptide directing secretion; sequence MMPKHCLLGLLIILLSSATE. Fibronectin type-III domains follow at residues 29–128 and 129–230; these read TPQK…TKLD and PPVV…VHIP. 2 disulfide bridges follow: Cys-77-Cys-85 and Cys-205-Cys-226.

It belongs to the type II cytokine receptor family. Highly expressed in lymph nodes and at lower levels in lung, spleen, and thymus. Not expressed in kidney, liver and heart.

Its subcellular location is the secreted. In terms of biological role, receptor for IL22. Binds to IL22, prevents interaction with the functional IL-22R complex and blocks the activity of IL22 (in vitro). May play an important role as an IL22 antagonist in the regulation of inflammatory responses. The protein is Interleukin-22 receptor subunit alpha-2 (Il22ra2) of Mus musculus (Mouse).